Consider the following 441-residue polypeptide: Deoxyguanosinetriphosphate triphosphohydrolase-like protein (441 aa).

Residues Arg59 to Ala250 form the HD domain.

This sequence belongs to the dGTPase family. Type 2 subfamily.

This Shewanella loihica (strain ATCC BAA-1088 / PV-4) protein is Deoxyguanosinetriphosphate triphosphohydrolase-like protein.